The following is a 234-amino-acid chain: Transcription factor UDT1 (234 aa).

The disordered stretch occupies residues 1 to 51; it reads MPRRARARGGGGGGGEEVKVEDDFIDSVLNFGGGGGGEEDGDDGEEEQQQQ. Residues 37-48 show a composition bias toward acidic residues; that stretch reads GEEDGDDGEEEQ. Residues 61–74 are basic motif; degenerate; sequence EFKSKNLEAERRRR. In terms of domain architecture, bHLH spans 61–110; the sequence is EFKSKNLEAERRRRGRLNGNIFALRAVVPKITKMSKEATLSDAIEHIKNL. A helix-loop-helix motif region spans residues 75–110; it reads GRLNGNIFALRAVVPKITKMSKEATLSDAIEHIKNL.

This sequence belongs to the bHLH protein family.

It localises to the nucleus. In terms of biological role, transcription factor that plays a crucial role in tapetum development. Required for male fertility and pollen differentiation within the developing anther. Plays a major role in maintaining tapetum development, starting in early meiosis. Required for pollen mother cell meiosis. May regulate the anther-specific cysteine protease CP1 and lipid-transfer proteins C4 and C6. Required for anther development. Functions in parallel with GAMYB to regulate early anther development. Functions upstream of the transcription factor TDR and may positively regulate its transcription. This Oryza sativa subsp. japonica (Rice) protein is Transcription factor UDT1.